We begin with the raw amino-acid sequence, 141 residues long: ATP synthase epsilon chain (141 aa).

It belongs to the ATPase epsilon chain family. As to quaternary structure, F-type ATPases have 2 components, CF(1) - the catalytic core - and CF(0) - the membrane proton channel. CF(1) has five subunits: alpha(3), beta(3), gamma(1), delta(1), epsilon(1). CF(0) has three main subunits: a, b and c.

Its subcellular location is the cell inner membrane. Produces ATP from ADP in the presence of a proton gradient across the membrane. This Thioalkalivibrio sulfidiphilus (strain HL-EbGR7) protein is ATP synthase epsilon chain.